The sequence spans 312 residues: DNA-directed RNA polymerase subunit alpha (312 aa).

An alpha N-terminal domain (alpha-NTD) region spans residues 1 to 226 (MIEFEKPIIT…EHLNLFTDLT (226 aa)). The segment at 242-312 (NDEKVLDRTI…DLGLGLKNDK (71 aa)) is alpha C-terminal domain (alpha-CTD).

It belongs to the RNA polymerase alpha chain family. As to quaternary structure, homodimer. The RNAP catalytic core consists of 2 alpha, 1 beta, 1 beta' and 1 omega subunit. When a sigma factor is associated with the core the holoenzyme is formed, which can initiate transcription.

It carries out the reaction RNA(n) + a ribonucleoside 5'-triphosphate = RNA(n+1) + diphosphate. In terms of biological role, DNA-dependent RNA polymerase catalyzes the transcription of DNA into RNA using the four ribonucleoside triphosphates as substrates. The polypeptide is DNA-directed RNA polymerase subunit alpha (Streptococcus agalactiae serotype Ia (strain ATCC 27591 / A909 / CDC SS700)).